A 508-amino-acid chain; its full sequence is GMP synthase [glutamine-hydrolyzing] (508 aa).

A Glutamine amidotransferase type-1 domain is found at Met-1 to Thr-189. Catalysis depends on Cys-78, which acts as the Nucleophile. Active-site residues include His-163 and Glu-165. Residues Trp-190 to Arg-383 form the GMPS ATP-PPase domain. Residue Ser-217 to Thr-223 coordinates ATP.

In terms of assembly, homodimer.

The enzyme catalyses XMP + L-glutamine + ATP + H2O = GMP + L-glutamate + AMP + diphosphate + 2 H(+). It functions in the pathway purine metabolism; GMP biosynthesis; GMP from XMP (L-Gln route): step 1/1. Catalyzes the synthesis of GMP from XMP. The sequence is that of GMP synthase [glutamine-hydrolyzing] (guaA) from Helicobacter pylori (strain J99 / ATCC 700824) (Campylobacter pylori J99).